Here is a 207-residue protein sequence, read N- to C-terminus: MNEMLTLVGQLRSDFGTSSARALRRQGKVPGVIYKKGITPIHVCTLEKEVAKLYRKPFFSSTVIQLQVDDQRFKVLPKAVQLHPVTEFMNHIDFILVEQNGSMQKVKVPISFEGKEKSLGIKRGGYLNIVKRYVDLLCPVDKIPQCIKCDIANVSVGASIKISRLELPEGCNLVKSTTDYVIASVIGKSSKQDKEEEGTAEDGADSK.

It belongs to the bacterial ribosomal protein bL25 family. CTC subfamily. As to quaternary structure, part of the 50S ribosomal subunit; part of the 5S rRNA/L5/L18/L25 subcomplex. Contacts the 5S rRNA. Binds to the 5S rRNA independently of L5 and L18.

Its function is as follows. This is one of the proteins that binds to the 5S RNA in the ribosome where it forms part of the central protuberance. This Orientia tsutsugamushi (strain Boryong) (Rickettsia tsutsugamushi) protein is Large ribosomal subunit protein bL25.